The primary structure comprises 177 residues: Alkyl hydroperoxide reductase AhpD (177 aa).

The Proton donor role is filled by cysteine 131. Residues cysteine 131 and cysteine 134 are joined by a disulfide bond. The Cysteine sulfenic acid (-SOH) intermediate role is filled by cysteine 134.

The protein belongs to the AhpD family. In terms of assembly, homotrimer.

The catalysed reaction is N(6)-[(R)-dihydrolipoyl]-L-lysyl-[lipoyl-carrier protein] + a hydroperoxide = N(6)-[(R)-lipoyl]-L-lysyl-[lipoyl-carrier protein] + an alcohol + H2O. Antioxidant protein with alkyl hydroperoxidase activity. Required for the reduction of the AhpC active site cysteine residues and for the regeneration of the AhpC enzyme activity. This chain is Alkyl hydroperoxide reductase AhpD, found in Streptomyces avermitilis (strain ATCC 31267 / DSM 46492 / JCM 5070 / NBRC 14893 / NCIMB 12804 / NRRL 8165 / MA-4680).